Here is a 628-residue protein sequence, read N- to C-terminus: Phosphomethylpyrimidine synthase (628 aa).

Substrate contacts are provided by residues Asn228, Met257, Tyr286, His322, 342 to 344 (SRG), 383 to 386 (DGLR), and Glu422. Residue His426 coordinates Zn(2+). Residue Tyr449 coordinates substrate. His490 contacts Zn(2+). [4Fe-4S] cluster contacts are provided by Cys570, Cys573, and Cys578.

Belongs to the ThiC family. As to quaternary structure, homodimer. Requires [4Fe-4S] cluster as cofactor.

The enzyme catalyses 5-amino-1-(5-phospho-beta-D-ribosyl)imidazole + S-adenosyl-L-methionine = 4-amino-2-methyl-5-(phosphooxymethyl)pyrimidine + CO + 5'-deoxyadenosine + formate + L-methionine + 3 H(+). It participates in cofactor biosynthesis; thiamine diphosphate biosynthesis. In terms of biological role, catalyzes the synthesis of the hydroxymethylpyrimidine phosphate (HMP-P) moiety of thiamine from aminoimidazole ribotide (AIR) in a radical S-adenosyl-L-methionine (SAM)-dependent reaction. The polypeptide is Phosphomethylpyrimidine synthase (Methylibium petroleiphilum (strain ATCC BAA-1232 / LMG 22953 / PM1)).